The primary structure comprises 453 residues: Ribulose bisphosphate carboxylase large chain (453 aa).

Residues 1 to 2 constitute a propeptide that is removed on maturation; sequence MS. Residue P3 is modified to N-acetylproline. K14 carries the post-translational modification N6,N6,N6-trimethyllysine. Residues N123 and T173 each contribute to the substrate site. K175 acts as the Proton acceptor in catalysis. K177 is a binding site for substrate. K201, D203, and E204 together coordinate Mg(2+). The residue at position 201 (K201) is an N6-carboxylysine. H294 functions as the Proton acceptor in the catalytic mechanism. R295, H327, and S379 together coordinate substrate.

The protein belongs to the RuBisCO large chain family. Type I subfamily. Heterohexadecamer of 8 large chains and 8 small chains; disulfide-linked. The disulfide link is formed within the large subunit homodimers. Mg(2+) is required as a cofactor. In terms of processing, the disulfide bond which can form in the large chain dimeric partners within the hexadecamer appears to be associated with oxidative stress and protein turnover.

The protein localises to the plastid. It localises to the chloroplast. The catalysed reaction is 2 (2R)-3-phosphoglycerate + 2 H(+) = D-ribulose 1,5-bisphosphate + CO2 + H2O. The enzyme catalyses D-ribulose 1,5-bisphosphate + O2 = 2-phosphoglycolate + (2R)-3-phosphoglycerate + 2 H(+). In terms of biological role, ruBisCO catalyzes two reactions: the carboxylation of D-ribulose 1,5-bisphosphate, the primary event in carbon dioxide fixation, as well as the oxidative fragmentation of the pentose substrate in the photorespiration process. Both reactions occur simultaneously and in competition at the same active site. The protein is Ribulose bisphosphate carboxylase large chain of Galium elongatum (Great marsh bedstraw).